Reading from the N-terminus, the 476-residue chain is Sulfate adenylyltransferase subunit 1 (476 aa).

Residues 24 to 239 form the tr-type G domain; the sequence is KSLLRFLTCG…LLETVDVDHE (216 aa). The interval 33 to 40 is G1; it reads GSVDDGKS. Position 33-40 (33-40) interacts with GTP; the sequence is GSVDDGKS. The interval 91–95 is G2; that stretch reads GITID. The interval 112–115 is G3; that stretch reads DTPG. GTP-binding positions include 112 to 116 and 167 to 170; these read DTPGH and NKMD. The G4 stretch occupies residues 167–170; sequence NKMD. The segment at 205–207 is G5; the sequence is SAL.

The protein belongs to the TRAFAC class translation factor GTPase superfamily. Classic translation factor GTPase family. CysN/NodQ subfamily. As to quaternary structure, heterodimer composed of CysD, the smaller subunit, and CysN.

The enzyme catalyses sulfate + ATP + H(+) = adenosine 5'-phosphosulfate + diphosphate. It functions in the pathway sulfur metabolism; hydrogen sulfide biosynthesis; sulfite from sulfate: step 1/3. In terms of biological role, with CysD forms the ATP sulfurylase (ATPS) that catalyzes the adenylation of sulfate producing adenosine 5'-phosphosulfate (APS) and diphosphate, the first enzymatic step in sulfur assimilation pathway. APS synthesis involves the formation of a high-energy phosphoric-sulfuric acid anhydride bond driven by GTP hydrolysis by CysN coupled to ATP hydrolysis by CysD. The protein is Sulfate adenylyltransferase subunit 1 of Vibrio campbellii (strain ATCC BAA-1116).